Consider the following 690-residue polypeptide: Molting protein mlt-10 (690 aa).

The first 18 residues, 1 to 18 (MRNLNLILFTALAAVTYA), serve as a signal peptide directing secretion. N-linked (GlcNAc...) asparagine glycosylation is found at Asn-42 and Asn-204. A coiled-coil region spans residues 219–285 (IKKLGEEAKR…MRKKEADEIR (67 aa)). Residues Asn-305 and Asn-415 are each glycosylated (N-linked (GlcNAc...) asparagine). The next 5 membrane-spanning stretches (helical) occupy residues 514 to 534 (PFIL…FIVL), 544 to 564 (LSPA…PLIL), 579 to 599 (FSPI…PGVF), 618 to 638 (VFTP…TPMV), and 643 to 663 (ILSP…FAVV).

It belongs to the mlt-10-like family. In terms of tissue distribution, expressed in the major body hypodermal syncytium (Hyp7), the dorsal and ventral ridges of the hypodermis, hypodermal cells in the head and tail, and the pharyngeal myoepithelium, but not the lateral seam cells.

The protein localises to the membrane. It is found in the secreted. In terms of biological role, required for the efficient removal of larval cuticles during the molting cycle as well as the synthesis of new cuticles. The protein is Molting protein mlt-10 of Caenorhabditis elegans.